The sequence spans 417 residues: MTFSLFGDKFTRHSGITLLMEDLNDGLRTPGAIMLGGGNPAQIPEMQDYFQTLLTDMLESGKATDALCNYDGPQGKTELLTLLAGMLREKLGWDIEPQNIALTNGSQSAFFYLFNLFAGRRADGRVKKVLFPLAPEYIGYADAGLEEDLFVSARPNIELLPEGQFKYHVDFEHLHIGEETGMICVSRPTNPTGNVITDEELLKLDALANQHGIPLVIDNAYGVPFPGIIFSEARPLWNPNIVLCMSLSKLGLPGSRCGIIIANEKIITAITNMNGIISLAPGGIGPAMMCEMIKRNDLLRLSETVIKPFYYQRVQETIAIIRRYLPENRCLIHKPEGAIFLWLWFKDLPITTKQLYQRLKARGVLMVPGHNFFPGLDKPWPHTHQCMRMNYVPEPEKIEAGVKILAEEIERAWAESH.

Lys249 bears the N6-(pyridoxal phosphate)lysine mark.

It belongs to the class-I pyridoxal-phosphate-dependent aminotransferase family. Homodimer. Requires pyridoxal 5'-phosphate as cofactor.

It localises to the cytoplasm. It carries out the reaction L-valine + pyruvate = 3-methyl-2-oxobutanoate + L-alanine. Functionally, involved in the biosynthesis of alanine. This Escherichia coli (strain K12) protein is Valine--pyruvate aminotransferase (avtA).